The following is a 310-amino-acid chain: Porphobilinogen deaminase (310 aa).

C240 carries the S-(dipyrrolylmethanemethyl)cysteine modification.

This sequence belongs to the HMBS family. Monomer. The cofactor is dipyrromethane.

It catalyses the reaction 4 porphobilinogen + H2O = hydroxymethylbilane + 4 NH4(+). Its pathway is porphyrin-containing compound metabolism; protoporphyrin-IX biosynthesis; coproporphyrinogen-III from 5-aminolevulinate: step 2/4. Tetrapolymerization of the monopyrrole PBG into the hydroxymethylbilane pre-uroporphyrinogen in several discrete steps. The polypeptide is Porphobilinogen deaminase (Desulfosudis oleivorans (strain DSM 6200 / JCM 39069 / Hxd3) (Desulfococcus oleovorans)).